The sequence spans 278 residues: Trans-2,3-dihydro-3-hydroxyanthranilate isomerase (278 aa).

Residue glutamate 45 is part of the active site.

This sequence belongs to the PhzF family.

It catalyses the reaction (5S,6S)-6-amino-5-hydroxycyclohexa-1,3-diene-1-carboxyate = (1R,6S)-6-amino-5-oxocyclohex-2-ene-1-carboxylate. Its pathway is secondary metabolite biosynthesis; pyocyanine biosynthesis. Functionally, isomerase that catalyzes the condensation of two molecules of trans-2,3-dihydro-3-hydroxyanthranilic acid (DHHA) into the phenazine ring system. The final product is not yet known. The chain is Trans-2,3-dihydro-3-hydroxyanthranilate isomerase (phzF1) from Pseudomonas aeruginosa (strain ATCC 15692 / DSM 22644 / CIP 104116 / JCM 14847 / LMG 12228 / 1C / PRS 101 / PAO1).